The chain runs to 184 residues: Outer-membrane lipoprotein carrier protein (184 aa).

An N-terminal signal peptide occupies residues Met-1 to Ala-19.

This sequence belongs to the LolA family. As to quaternary structure, monomer.

It is found in the periplasm. In terms of biological role, participates in the translocation of lipoproteins from the inner membrane to the outer membrane. Only forms a complex with a lipoprotein if the residue after the N-terminal Cys is not an aspartate (The Asp acts as a targeting signal to indicate that the lipoprotein should stay in the inner membrane). The protein is Outer-membrane lipoprotein carrier protein of Helicobacter pylori (strain P12).